The sequence spans 74 residues: Toxin Td6 (74 aa).

An N-terminal signal peptide occupies residues Ile-1 to Glu-8. Residues Lys-9–Gly-71 enclose the LCN-type CS-alpha/beta domain. 4 cysteine pairs are disulfide-bonded: Cys-19–Cys-70, Cys-23–Cys-45, Cys-31–Cys-51, and Cys-35–Cys-53. Position 72 is an arginine amide (Arg-72).

The protein belongs to the long (4 C-C) scorpion toxin superfamily. Sodium channel inhibitor family. Beta subfamily. In terms of tissue distribution, expressed by the venom gland.

It is found in the secreted. In terms of biological role, beta toxins bind voltage-independently at site-4 of sodium channels (Nav) and shift the voltage of activation toward more negative potentials thereby affecting sodium channel activation and promoting spontaneous and repetitive firing. This chain is Toxin Td6, found in Tityus discrepans (Venezuelan scorpion).